Reading from the N-terminus, the 82-residue chain is Penaeidin-3b (82 aa).

The first 19 residues, 1–19 (MRLVVCLVFLASFALVCQG), serve as a signal peptide directing secretion. Position 20 is a pyrrolidone carboxylic acid (Gln20). 3 cysteine pairs are disulfide-bonded: Cys51–Cys66, Cys55–Cys73, and Cys67–Cys74. Ser81 is modified (serine amide).

It belongs to the penaeidin family. As to expression, higher expression in hemocytes and to a lesser extent in heart, testis, gills, intestine, lymphoid organ and hepatopancreas. Traces in eyes and subcuticular epithelium. Not present in the brain.

Its subcellular location is the cytoplasmic granule. Functionally, antibacterial activity against M.luteus and E.coli bacteria. Antifungal activity against N.crassa and F.oxysporum. Presents chitin-binding activity. The polypeptide is Penaeidin-3b (Penaeus vannamei (Whiteleg shrimp)).